The following is a 99-amino-acid chain: Protein AC150 (99 aa).

A Chitin-binding type-2 domain is found at 38-96; sequence GFSCYNKPIGVNFPHPTRCDAFYMCVGLNQKLELICPEGFEFDPDVKNCVPISDYGCTA. Cys-73 and Cys-86 are oxidised to a cystine.

The protein resides in the host nucleus. The protein localises to the virion. Functionally, plays a role in primary oral infection of the host. The polypeptide is Protein AC150 (Autographa californica nuclear polyhedrosis virus (AcMNPV)).